A 206-amino-acid chain; its full sequence is Pyridoxal 5'-phosphate synthase subunit PdxT (206 aa).

59-61 serves as a coordination point for L-glutamine; that stretch reads GES. The active-site Nucleophile is cysteine 91. Residues arginine 123 and 151-152 each bind L-glutamine; that span reads IR. Active-site charge relay system residues include histidine 187 and glutamate 189.

The protein belongs to the glutaminase PdxT/SNO family. In terms of assembly, in the presence of PdxS, forms a dodecamer of heterodimers. Only shows activity in the heterodimer.

The catalysed reaction is aldehydo-D-ribose 5-phosphate + D-glyceraldehyde 3-phosphate + L-glutamine = pyridoxal 5'-phosphate + L-glutamate + phosphate + 3 H2O + H(+). The enzyme catalyses L-glutamine + H2O = L-glutamate + NH4(+). It functions in the pathway cofactor biosynthesis; pyridoxal 5'-phosphate biosynthesis. Its function is as follows. Catalyzes the hydrolysis of glutamine to glutamate and ammonia as part of the biosynthesis of pyridoxal 5'-phosphate. The resulting ammonia molecule is channeled to the active site of PdxS. This is Pyridoxal 5'-phosphate synthase subunit PdxT from Mycobacterium sp. (strain KMS).